The following is a 355-amino-acid chain: Methylthioribose-1-phosphate isomerase (355 aa).

Substrate contacts are provided by residues 47–49, Arg-91, and Gln-199; that span reads RGA. The active-site Proton donor is Asp-240. A substrate-binding site is contributed by 250-251; the sequence is NK.

Belongs to the eIF-2B alpha/beta/delta subunits family. MtnA subfamily.

It catalyses the reaction 5-(methylsulfanyl)-alpha-D-ribose 1-phosphate = 5-(methylsulfanyl)-D-ribulose 1-phosphate. It participates in amino-acid biosynthesis; L-methionine biosynthesis via salvage pathway; L-methionine from S-methyl-5-thio-alpha-D-ribose 1-phosphate: step 1/6. Its function is as follows. Catalyzes the interconversion of methylthioribose-1-phosphate (MTR-1-P) into methylthioribulose-1-phosphate (MTRu-1-P). This is Methylthioribose-1-phosphate isomerase from Oleidesulfovibrio alaskensis (strain ATCC BAA-1058 / DSM 17464 / G20) (Desulfovibrio alaskensis).